A 422-amino-acid chain; its full sequence is Mitochondrial distribution and morphology protein 12 (422 aa).

Residues 1-386 (MSFDINWNQL…WPSWICIDMN (386 aa)) form the SMP-LTD domain. 2 disordered regions span residues 74 to 134 (GATN…HDLG) and 387 to 422 (DDGDDDDDDEVEDSNVSDGDGKDNDGKHGDGPTHEV). Acidic residues-rich tracts occupy residues 109–130 (FDDDDDDDEGVDEDDDDDEYDD) and 387–401 (DDGDDDDDDEVEDSN). A compositionally biased stretch (basic and acidic residues) spans 405-422 (GDGKDNDGKHGDGPTHEV).

It belongs to the MDM12 family. As to quaternary structure, component of the ER-mitochondria encounter structure (ERMES) or MDM complex, composed of MMM1, MDM10, MDM12 and MDM34. An MMM1 homodimer associates with one molecule of MDM12 on each side in a pairwise head-to-tail manner, and the SMP-LTD domains of MMM1 and MDM12 generate a continuous hydrophobic tunnel for phospholipid trafficking.

The protein resides in the mitochondrion outer membrane. Its subcellular location is the endoplasmic reticulum membrane. Functionally, component of the ERMES/MDM complex, which serves as a molecular tether to connect the endoplasmic reticulum (ER) and mitochondria. Components of this complex are involved in the control of mitochondrial shape and protein biogenesis, and function in nonvesicular lipid trafficking between the ER and mitochondria. MDM12 is required for the interaction of the ER-resident membrane protein MMM1 and the outer mitochondrial membrane-resident beta-barrel protein MDM10. The MDM12-MMM1 subcomplex functions in the major beta-barrel assembly pathway that is responsible for biogenesis of all mitochondrial outer membrane beta-barrel proteins, and acts in a late step after the SAM complex. The MDM10-MDM12-MMM1 subcomplex further acts in the TOM40-specific pathway after the action of the MDM12-MMM1 complex. Essential for establishing and maintaining the structure of mitochondria and maintenance of mtDNA nucleoids. The protein is Mitochondrial distribution and morphology protein 12 of Candida dubliniensis (strain CD36 / ATCC MYA-646 / CBS 7987 / NCPF 3949 / NRRL Y-17841) (Yeast).